A 277-amino-acid chain; its full sequence is Small ribosomal subunit protein uS3 (277 aa).

One can recognise a KH type-2 domain in the interval 43–111 (IRELMSKGMD…QIQLNILEVK (69 aa)). The segment at 217 to 277 (AAQQAAAPSS…AEANNAEGGK (61 aa)) is disordered. Basic and acidic residues predominate over residues 245-258 (NDRNDRGGRRERDS). Positions 259–277 (AAAPQQNSAAEANNAEGGK) are enriched in low complexity.

It belongs to the universal ribosomal protein uS3 family. Part of the 30S ribosomal subunit. Forms a tight complex with proteins S10 and S14.

Functionally, binds the lower part of the 30S subunit head. Binds mRNA in the 70S ribosome, positioning it for translation. The sequence is that of Small ribosomal subunit protein uS3 from Kocuria rhizophila (strain ATCC 9341 / DSM 348 / NBRC 103217 / DC2201).